The chain runs to 325 residues: Diaminopimelate epimerase (325 aa).

Substrate is bound by residues N11 and N69. The active-site Proton donor is the C78. Substrate is bound by residues 79-80 (GN), N166, N203, and 221-222 (ER). The active-site Proton acceptor is C230. 231–232 (GT) provides a ligand contact to substrate.

The protein belongs to the diaminopimelate epimerase family. In terms of assembly, homodimer.

Its subcellular location is the cytoplasm. It catalyses the reaction (2S,6S)-2,6-diaminopimelate = meso-2,6-diaminopimelate. It participates in amino-acid biosynthesis; L-lysine biosynthesis via DAP pathway; DL-2,6-diaminopimelate from LL-2,6-diaminopimelate: step 1/1. Functionally, catalyzes the stereoinversion of LL-2,6-diaminopimelate (L,L-DAP) to meso-diaminopimelate (meso-DAP), a precursor of L-lysine and an essential component of the bacterial peptidoglycan. This Ligilactobacillus salivarius (strain UCC118) (Lactobacillus salivarius) protein is Diaminopimelate epimerase.